Consider the following 465-residue polypeptide: Ribosomal oxygenase 2 (465 aa).

The 133-residue stretch at 139–271 (QPQRYKDELW…NSWGDCLLDS (133 aa)) folds into the JmjC domain. Residues H179, D181, and H240 each contribute to the Fe cation site. Residue S309 is modified to Phosphoserine.

The protein belongs to the ROX family. MINA53 subfamily. It depends on Fe(2+) as a cofactor. As to expression, predominantly expressed in testis. Expressed at high levels in spleen, thymus, and colon, but barely detectable in brain, skeletal muscle, and seminal vesicle (at protein level).

Its subcellular location is the nucleus. It is found in the nucleolus. The enzyme catalyses L-histidyl-[ribosomal protein uL15] + 2-oxoglutarate + O2 = (3S)-3-hydroxy-L-histidyl-[ribosomal protein uL15] + succinate + CO2. It carries out the reaction L-histidyl-[protein] + 2-oxoglutarate + O2 = (3S)-3-hydroxy-L-histidyl-[protein] + succinate + CO2. Oxygenase that can act as both a histone lysine demethylase and a ribosomal histidine hydroxylase. Is involved in the demethylation of trimethylated 'Lys-9' on histone H3 (H3K9me3), leading to an increase in ribosomal RNA expression. Also catalyzes the hydroxylation of 60S ribosomal protein L27a on 'His-39'. May play an important role in cell growth and survival. May be involved in ribosome biogenesis, most likely during the assembly process of pre-ribosomal particles. This is Ribosomal oxygenase 2 from Mus musculus (Mouse).